The sequence spans 280 residues: uncharacterized protein (280 aa).

Residues 26 to 127 form the KilA-N domain; sequence YFMSMKLLDV…TRVSILMRYY (102 aa).

This is an uncharacterized protein from Vertebrata (FPV).